The following is a 1149-amino-acid chain: Potassium channel subfamily U member 1 (1149 aa).

At 1–24 the chain is on the extracellular side; that stretch reads MFQTKLRNETWEDLPKMSCTTEIQ. A helical membrane pass occupies residues 25–45; that stretch reads AAFILSSFVTFFSGLIILLIF. The Cytoplasmic segment spans residues 46-101; it reads RLIWRSVKKWQIIKGTGIILELFTSGTIARSHVRSLHFQGQFRDHIEMLLSAQTFV. The helical transmembrane segment at 102–122 threads the bilayer; sequence GQVLVILVFVLSIGSLIIYFI. The Extracellular segment spans residues 123-138; sequence NSADPVGSCSSYEDKT. A helical transmembrane segment spans residues 139–159; it reads IPIDLVFNAFFSFYFGLRFMA. Residues 160-163 lie on the Cytoplasmic side of the membrane; the sequence is ADDK. A helical membrane pass occupies residues 164–184; that stretch reads IKFWLEMNSIVDIFTIPPTFI. Over 185–188 the chain is Extracellular; it reads SYYL. A helical; Voltage-sensor transmembrane segment spans residues 189–209; the sequence is KSNWLGLRFLRALRLLELPQI. Residues 210-226 lie on the Cytoplasmic side of the membrane; the sequence is LQILRAIKTSNSVKFSK. A helical transmembrane segment spans residues 227-247; sequence LLSIILSTWFTAAGFIHLVEN. At 248–259 the chain is on the extracellular side; sequence SGDPWLKGRNSQ. An intramembrane region (pore-forming) is located at residues 260–282; sequence NISYFESIYLVMATTSTVGFGDV. Positions 276-279 match the Selectivity for potassium motif; that stretch reads TVGF. Residues 283 to 291 are Extracellular-facing; that stretch reads VAKTSLGRT. Residues 292-312 traverse the membrane as a helical segment; the sequence is FIMFFTLGSLILFANYIPEMV. Residues 313 to 1149 are Cytoplasmic-facing; sequence ELFANKRKYT…EDPFAYSEPL (837 aa). RCK N-terminal domains follow at residues 331–473 and 713–884; these read KKFI…DNII and RNHI…EGSL. Disordered stretches follow at residues 828–854 and 1118–1149; these read QIDS…NEKS and SQIP…SEPL. Over residues 830 to 840 the composition is skewed to low complexity; that stretch reads DSSSDPSPSVS. The segment covering 1125-1135 has biased composition (basic and acidic residues); the sequence is NAKENERKTSD.

The protein belongs to the potassium channel family. Calcium-activated (TC 1.A.1.3) subfamily. KCa5.1/KCNU1 sub-subfamily. As to quaternary structure, homotetramer; which constitutes the activated potassium channel. Interacts with LRRC52; this interaction changes channel gating properties, such as shifting gating to more negative potentials at a given pH. As to expression, testis-specific.

The protein resides in the cell membrane. Its subcellular location is the cell projection. It localises to the cilium. The protein localises to the flagellum membrane. It catalyses the reaction K(+)(in) = K(+)(out). Regulated by changes in cytosolic pH; activated by alkalization. Activated by intracellular Ca(2+). Despite strong sequence similarity, human KCNU1 channels are significantly more sensitive to activation by internal Ca(2+) and less pH-sensitive than mouse KCNU1. VU0546110 acts as a selective inhibitor. The auxiliary subunit LRRC52 shifts the activation of KCNU1 to more negative potentials at a given pH. In terms of biological role, testis-specific potassium channel activated by both intracellular pH and membrane voltage that mediates export of K(+). Represents the primary spermatozoan K(+) current. The channel underlies a pH-triggered membrane hyperpolarization during the process of sperm capacitation, as sperm encounter the alkaline environment near the ovum in the female reproductive tract, thereby playing an essential for male fertility. The sequence is that of Potassium channel subfamily U member 1 from Homo sapiens (Human).